A 153-amino-acid polypeptide reads, in one-letter code: HTH-type transcriptional regulator Zrp (153 aa).

Positions 2 to 63 (IDYRDRHILS…LLDRKKINLP (62 aa)) constitute an HTH asnC-type domain. Residues 21-40 (LAEIAERVALSVSACSRRVA) constitute a DNA-binding region (H-T-H motif).

This chain is HTH-type transcriptional regulator Zrp (zrp), found in Zymomonas mobilis subsp. mobilis (strain ATCC 10988 / DSM 424 / LMG 404 / NCIMB 8938 / NRRL B-806 / ZM1).